Reading from the N-terminus, the 427-residue chain is Peptidase B (427 aa).

Mn(2+)-binding residues include lysine 195 and aspartate 200. The active site involves lysine 207. Mn(2+) is bound by residues aspartate 218, aspartate 277, and glutamate 279. Arginine 281 is an active-site residue.

The protein belongs to the peptidase M17 family. Homohexamer. It depends on Mn(2+) as a cofactor.

The protein resides in the cytoplasm. The enzyme catalyses Release of an N-terminal amino acid, Xaa, from a peptide or arylamide. Xaa is preferably Glu or Asp but may be other amino acids, including Leu, Met, His, Cys and Gln.. Probably plays an important role in intracellular peptide degradation. The chain is Peptidase B from Salmonella choleraesuis (strain SC-B67).